Here is a 232-residue protein sequence, read N- to C-terminus: Ubiquinone biosynthesis O-methyltransferase (232 aa).

Residues arginine 36, glycine 55, aspartate 76, and leucine 120 each contribute to the S-adenosyl-L-methionine site.

Belongs to the methyltransferase superfamily. UbiG/COQ3 family.

The catalysed reaction is a 3-demethylubiquinol + S-adenosyl-L-methionine = a ubiquinol + S-adenosyl-L-homocysteine + H(+). It catalyses the reaction a 3-(all-trans-polyprenyl)benzene-1,2-diol + S-adenosyl-L-methionine = a 2-methoxy-6-(all-trans-polyprenyl)phenol + S-adenosyl-L-homocysteine + H(+). It functions in the pathway cofactor biosynthesis; ubiquinone biosynthesis. In terms of biological role, O-methyltransferase that catalyzes the 2 O-methylation steps in the ubiquinone biosynthetic pathway. The protein is Ubiquinone biosynthesis O-methyltransferase of Pseudomonas entomophila (strain L48).